The sequence spans 241 residues: CD99 antigen-like protein 2 (241 aa).

An N-terminal signal peptide occupies residues 1 to 23 (MAKWGSPFVFALACLALSWRVYG). The Extracellular portion of the chain corresponds to 24–173 (DDFDLYDALG…TGFGSQAETG (150 aa)). Residues 30-168 (DALGDPTEKP…NDGSDTGFGS (139 aa)) form a disordered region. Positions 143–154 (GGGGGGGGGRAT) are enriched in gly residues. Residues 174–196 (TIAGIASALAMALIGAVSSYISY) form a helical membrane-spanning segment. Residues 197–241 (QQKKFCFSIQEGLNAEYVKGEHMEAVVSEEPQVKYSVVESQSAIP) are Cytoplasmic-facing.

Belongs to the CD99 family.

The protein localises to the cell membrane. It localises to the cell junction. Functionally, may function as a homophilic adhesion molecule. This Xenopus tropicalis (Western clawed frog) protein is CD99 antigen-like protein 2 (cd99l2).